The sequence spans 264 residues: tRNA (guanine-N(1)-)-methyltransferase (264 aa).

S-adenosyl-L-methionine is bound by residues G125 and 145–150; that span reads LGDFVL.

It belongs to the RNA methyltransferase TrmD family. Homodimer.

Its subcellular location is the cytoplasm. The enzyme catalyses guanosine(37) in tRNA + S-adenosyl-L-methionine = N(1)-methylguanosine(37) in tRNA + S-adenosyl-L-homocysteine + H(+). Its function is as follows. Specifically methylates guanosine-37 in various tRNAs. This is tRNA (guanine-N(1)-)-methyltransferase from Burkholderia ambifaria (strain ATCC BAA-244 / DSM 16087 / CCUG 44356 / LMG 19182 / AMMD) (Burkholderia cepacia (strain AMMD)).